We begin with the raw amino-acid sequence, 628 residues long: tRNA uridine 5-carboxymethylaminomethyl modification enzyme MnmG (628 aa).

FAD contacts are provided by residues 14–19 (GAGHAG), Val-126, and Ser-181. Position 273 to 287 (273 to 287 (GPRYCPSIEDKVVRF)) interacts with NAD(+). Gln-370 is an FAD binding site.

It belongs to the MnmG family. Homodimer. Heterotetramer of two MnmE and two MnmG subunits. Requires FAD as cofactor.

The protein resides in the cytoplasm. Functionally, NAD-binding protein involved in the addition of a carboxymethylaminomethyl (cmnm) group at the wobble position (U34) of certain tRNAs, forming tRNA-cmnm(5)s(2)U34. This Bacillus licheniformis (strain ATCC 14580 / DSM 13 / JCM 2505 / CCUG 7422 / NBRC 12200 / NCIMB 9375 / NCTC 10341 / NRRL NRS-1264 / Gibson 46) protein is tRNA uridine 5-carboxymethylaminomethyl modification enzyme MnmG.